We begin with the raw amino-acid sequence, 164 residues long: NADH-quinone oxidoreductase subunit J (164 aa).

The next 5 membrane-spanning stretches (helical) occupy residues 1 to 21, 30 to 50, 54 to 74, 94 to 114, and 138 to 158; these read MEFF…CSIF, LYLI…GATF, LEVI…IMMF, YINF…ILSY, and YILV…IVSH.

It belongs to the complex I subunit 6 family. As to quaternary structure, composed of 13 different subunits. Subunits NuoA, H, J, K, L, M, N constitute the membrane sector of the complex.

The protein localises to the cell membrane. It carries out the reaction a quinone + NADH + 5 H(+)(in) = a quinol + NAD(+) + 4 H(+)(out). In terms of biological role, NDH-1 shuttles electrons from NADH, via FMN and iron-sulfur (Fe-S) centers, to quinones in the respiratory chain. Couples the redox reaction to proton translocation (for every two electrons transferred, four hydrogen ions are translocated across the cytoplasmic membrane), and thus conserves the redox energy in a proton gradient. This is NADH-quinone oxidoreductase subunit J (nuoJ) from Buchnera aphidicola subsp. Baizongia pistaciae (strain Bp).